An 842-amino-acid chain; its full sequence is Elongation factor 2 (842 aa).

Residues 17-346 (TNVRNMSVIA…MIVLHLPSPV (330 aa)) enclose the tr-type G domain. Residues 26–33 (AHVDHGKS), 158–161 (NKVD), and 213–215 (SGL) contribute to the GTP site. His699 is subject to Diphthamide.

The protein belongs to the TRAFAC class translation factor GTPase superfamily. Classic translation factor GTPase family. EF-G/EF-2 subfamily.

The protein resides in the cytoplasm. It carries out the reaction GTP + H2O = GDP + phosphate + H(+). Its function is as follows. Catalyzes the GTP-dependent ribosomal translocation step during translation elongation. During this step, the ribosome changes from the pre-translocational (PRE) to the post-translocational (POST) state as the newly formed A-site-bound peptidyl-tRNA and P-site-bound deacylated tRNA move to the P and E sites, respectively. Catalyzes the coordinated movement of the two tRNA molecules, the mRNA and conformational changes in the ribosome. This chain is Elongation factor 2 (EFT2), found in Candida albicans (strain SC5314 / ATCC MYA-2876) (Yeast).